A 459-amino-acid polypeptide reads, in one-letter code: Glycosyl hydrolase family 109 protein (459 aa).

A signal peptide (tat-type signal) is located at residues 1–45; that stretch reads MAGDESRSNPFSRRTLLRTSAAAGAGLGVAGLSTGYGAAQPVRPA. NAD(+) contacts are provided by residues 70 to 71, Asp-92, 141 to 144, 161 to 162, and Asn-190; these read NR, WEWH, and EC. Substrate-binding positions include Tyr-219, Arg-238, 250–253, and Tyr-332; that span reads YPTH. Position 250 (Tyr-250) interacts with NAD(+). Residues 440-459 form a disordered region; it reads DFTRGRWQTPHPGVDSPKPA.

The protein belongs to the Gfo/Idh/MocA family. Glycosyl hydrolase 109 subfamily. NAD(+) serves as cofactor. Post-translationally, predicted to be exported by the Tat system. The position of the signal peptide cleavage has not been experimentally proven.

Functionally, glycosidase. The protein is Glycosyl hydrolase family 109 protein of Saccharopolyspora erythraea (strain ATCC 11635 / DSM 40517 / JCM 4748 / NBRC 13426 / NCIMB 8594 / NRRL 2338).